A 185-amino-acid chain; its full sequence is Elongation factor P (185 aa).

Belongs to the elongation factor P family.

It is found in the cytoplasm. It participates in protein biosynthesis; polypeptide chain elongation. Its function is as follows. Involved in peptide bond synthesis. Stimulates efficient translation and peptide-bond synthesis on native or reconstituted 70S ribosomes in vitro. Probably functions indirectly by altering the affinity of the ribosome for aminoacyl-tRNA, thus increasing their reactivity as acceptors for peptidyl transferase. This Staphylococcus aureus (strain Mu3 / ATCC 700698) protein is Elongation factor P.